The chain runs to 127 residues: MARVTNSPASRKRRKKVLKYAKGYFGSKSKLYRYAKEAVQHAWQYAYDHRRKKKSDFRALWIVRVNAACRNAGISYSRFMEGLKAANIALDRKVLADLAVRDEAGFNVLVKQAQDALKTKAASAKKA.

It belongs to the bacterial ribosomal protein bL20 family.

Functionally, binds directly to 23S ribosomal RNA and is necessary for the in vitro assembly process of the 50S ribosomal subunit. It is not involved in the protein synthesizing functions of that subunit. This chain is Large ribosomal subunit protein bL20, found in Opitutus terrae (strain DSM 11246 / JCM 15787 / PB90-1).